Consider the following 133-residue polypeptide: Salmonella pathogenicity island 2 protein C (133 aa).

Interacts with the mammalian NIPSNAP3A and HOOK3 proteins in infected cells.

The protein localises to the secreted. It localises to the cytoplasm. In terms of biological role, virulence protein that plays a central role in mammalian macrophage infection, by inhibiting phagosome-lysosome fusion and cellular trafficking, including trafficking of organelles that are devoid of Salmonella. May act by disrupting the function of the mammalian HOOK3 protein, a protein involved in the cellular traffic. Also required for actin ADP-ribosylase SpvB activity. The protein is Salmonella pathogenicity island 2 protein C (spiC) of Salmonella typhimurium (strain 14028s / SGSC 2262).